We begin with the raw amino-acid sequence, 298 residues long: Lipoyl synthase (298 aa).

[4Fe-4S] cluster is bound by residues cysteine 40, cysteine 45, cysteine 51, cysteine 67, cysteine 71, cysteine 74, and serine 280. The Radical SAM core domain occupies 53-269 (AVRKTATFMI…KEIALSKGFS (217 aa)).

It belongs to the radical SAM superfamily. Lipoyl synthase family. The cofactor is [4Fe-4S] cluster.

It localises to the cytoplasm. The catalysed reaction is [[Fe-S] cluster scaffold protein carrying a second [4Fe-4S](2+) cluster] + N(6)-octanoyl-L-lysyl-[protein] + 2 oxidized [2Fe-2S]-[ferredoxin] + 2 S-adenosyl-L-methionine + 4 H(+) = [[Fe-S] cluster scaffold protein] + N(6)-[(R)-dihydrolipoyl]-L-lysyl-[protein] + 4 Fe(3+) + 2 hydrogen sulfide + 2 5'-deoxyadenosine + 2 L-methionine + 2 reduced [2Fe-2S]-[ferredoxin]. It functions in the pathway protein modification; protein lipoylation via endogenous pathway; protein N(6)-(lipoyl)lysine from octanoyl-[acyl-carrier-protein]. Catalyzes the radical-mediated insertion of two sulfur atoms into the C-6 and C-8 positions of the octanoyl moiety bound to the lipoyl domains of lipoate-dependent enzymes, thereby converting the octanoylated domains into lipoylated derivatives. The polypeptide is Lipoyl synthase (Bacillus cereus (strain ATCC 10987 / NRS 248)).